Reading from the N-terminus, the 355-residue chain is Chromosomal protein D1 (355 aa).

The residue at position 1 (methionine 1) is an N-acetylmethionine. Residues 1–355 are disordered; that stretch reads MEEVAVKKRG…NYNDSESVAA (355 aa). A DNA-binding region (a.T hook 1) is located at residues 7–14; it reads KKRGRPSK. Serine 30 is modified (phosphoserine). DNA-binding regions (a.T hook) lie at residues 34 to 41 and 60 to 67; these read KKRGRPAK and KIQNDEDP. Over residues 64-77 the composition is skewed to acidic residues; the sequence is DEDPEDEGEEDGDG. A phosphoserine mark is found at serine 80, serine 88, and serine 89. Residues 94-101 constitute a DNA-binding region (a.T hook 4); sequence KGRGRPKS. Serine 107, serine 109, and serine 112 each carry phosphoserine. A Phosphothreonine modification is found at threonine 115. Serine 118 is subject to Phosphoserine. The span at 119–130 shows a compositional bias: basic residues; that stretch reads AKKRKAGRPKKH. The a.T hook 5 DNA-binding region spans 122-129; that stretch reads RKAGRPKK. Residues serine 133 and serine 135 each carry the phosphoserine; by CK2 modification. The segment covering 135 to 147 has biased composition (acidic residues); it reads SENEDDQDEDDDG. Phosphoserine occurs at positions 149, 150, 161, 164, and 170. Residues 155–162 constitute a DNA-binding region (a.T hook 6); it reads RPVGRPSA. A DNA-binding region (a.T hook 7) is located at residues 174–181; that stretch reads RGLGRPKK. Serine 186 is modified (phosphoserine; by CK2). The a.T hook 8 DNA-binding region spans 196–203; sequence KKRGRPPQ. Phosphoserine is present on serine 208. Positions 219-226 form a DNA-binding region, a.T hook 9; the sequence is RPRGRPKA. Acidic residues predominate over residues 237–247; sequence NDDDQDDENSG. 3 positions are modified to phosphoserine: serine 246, serine 252, and serine 253. DNA-binding regions (a.T hook) lie at residues 262-269 and 281-288; these read KKRGRPSL and KPRSRPAK. Phosphoserine is present on residues serine 299 and serine 307. Positions 307 to 318 are enriched in basic and acidic residues; that stretch reads SKKESNDEDRAV. Serine 311 is subject to Phosphoserine; by CK2. At threonine 321 the chain carries Phosphothreonine. At serine 332 the chain carries Phosphoserine; by CK2. Positions 345–355 are enriched in polar residues; it reads DNYNDSESVAA.

Its subcellular location is the nucleus. The protein localises to the chromosome. Functionally, this satellite DNA-associated protein is a double-stranded DNA binding protein specific for tracts of pure at DNA. It may play a role in organizing the higher-order structure of euchromatin as well as heterochromatin. This is Chromosomal protein D1 (D1) from Drosophila melanogaster (Fruit fly).